The chain runs to 291 residues: uncharacterized protein (291 aa).

10 consecutive transmembrane segments (helical) span residues 5-23 (ILLSLSASVLFGYLYYFST), 33-52 (IFGFRIIFTLPFVIAAVFLF), 69-91 (PLLIFGFLFNSAMMGIQIWLFLW), 101-120 (VSFGYLLLPLTMVLVGRLVF), 127-144 (VKFLAVVIAAIGVFSNIL), 148-165 (GLSWEALLVSFGYSTYFA), 172-194 (INDLAGFCLEMSLLLPVCIYFAW), 209-228 (LLLLVLLGLISGVALNTYIV), 235-257 (INVLGLLGYAEPIMMLFVSFLIG), and 262-284 (SETIPLFICLMISMILFMSEGLV).

This sequence belongs to the EamA transporter family.

The protein resides in the cell membrane. This is an uncharacterized protein from Pasteurella multocida (strain Pm70).